The chain runs to 158 residues: Protein BTG2 (158 aa).

Position 147 is a phosphoserine; by MAPK1 and MAPK3 (Ser-147). Ser-149 bears the Phosphoserine; by MAPK14 mark.

Belongs to the BTG family. As to quaternary structure, interacts with PRKCABP. Interacts with CNOT7 and CNOT8; indicative for an association with the CCR4-NOT complex. Interacts with PIN1, inducing mitochondrial depolarization. In terms of processing, phosphorylated at Ser-147 by MAPK1/ERK2 and MAPK3/ERK1, and at Ser-149 by MAPK14, leading to PIN1-binding and mitochondrial depolarization.

Its function is as follows. Anti-proliferative protein; the function is mediated by association with deadenylase subunits of the CCR4-NOT complex. Activates mRNA deadenylation in a CNOT6 and CNOT7-dependent manner. In vitro can inhibit deadenylase activity of CNOT7 and CNOT8. Involved in cell cycle regulation. Could be involved in the growth arrest and differentiation of the neuronal precursors. Modulates transcription regulation mediated by ESR1. Involved in mitochondrial depolarization and neurite outgrowth. This Homo sapiens (Human) protein is Protein BTG2 (BTG2).